The primary structure comprises 327 residues: MHGIKRKQWTKELLRQKRVQDEKKIYDYRSLTENVLNMRDEKIYSIEALKKTSELLEKNPEFNAIWNYRRDIIASLASELEIPFWDKELVFVMMLLKDYPKVYWIWNHRLWVLKHYPTSSPKVWQTELAVVNKLLEQDARNYHGWHYRRIVVGNIESITNKSLDKEEFEYTTIKINNNISNYSAWHQRVQIISRMFQKGEVGNQKEYIRTEISYIINAMFTDAEDQSVWFYIKWFIKNDIVCKTLDEQEYLKMLKDLRENILLINNDEIEFSGKQNIWCLKILLVLEDILEEKEALTERSSEQYLVQLIDADPLRKNRYLHLLEQHK.

PFTA repeat units follow at residues Y44–S78, F84–T118, V123–S157, L163–Q197, and Y207–V241.

Belongs to the protein prenyltransferase subunit alpha family. In terms of assembly, heterodimer of an alpha and a beta subunit.

It carries out the reaction geranylgeranyl diphosphate + L-cysteinyl-[protein] = S-geranylgeranyl-L-cysteinyl-[protein] + diphosphate. In terms of biological role, catalyzes the transfer of a geranyl-geranyl moiety from geranyl-geranyl pyrophosphate to proteins having the C-terminal -XCC or -XCXC, where both cysteines may become modified. Acts on YPT1 and SEC4. The polypeptide is Geranylgeranyl transferase type-2 subunit alpha (BET4) (Saccharomyces cerevisiae (strain ATCC 204508 / S288c) (Baker's yeast)).